The following is a 289-amino-acid chain: Cell division protein ZipA (289 aa).

Residue M1 is a topological domain, periplasmic. The helical transmembrane segment at 2 to 22 (EIGLREWLIVIGIIVIAGILF) threads the bilayer. The Cytoplasmic portion of the chain corresponds to 23–289 (DGWRRMRGSK…ERRALTQRRG (267 aa)). The tract at residues 48 to 141 (DEEETTSAEV…KPAQRITEDK (94 aa)) is disordered. 3 stretches are compositionally biased toward basic and acidic residues: residues 64 to 77 (LDTH…EHDL), 85 to 106 (REGK…KDEP), and 123 to 141 (GRDD…TEDK).

The protein belongs to the ZipA family. In terms of assembly, interacts with FtsZ via their C-terminal domains.

It localises to the cell inner membrane. Functionally, essential cell division protein that stabilizes the FtsZ protofilaments by cross-linking them and that serves as a cytoplasmic membrane anchor for the Z ring. Also required for the recruitment to the septal ring of downstream cell division proteins. The chain is Cell division protein ZipA from Pseudomonas savastanoi pv. phaseolicola (strain 1448A / Race 6) (Pseudomonas syringae pv. phaseolicola (strain 1448A / Race 6)).